A 277-amino-acid polypeptide reads, in one-letter code: Sulfur carrier protein FdhD (277 aa).

Residue cysteine 121 is the Cysteine persulfide intermediate of the active site. 260–265 (FCKPGR) provides a ligand contact to Mo-bis(molybdopterin guanine dinucleotide).

The protein belongs to the FdhD family.

It localises to the cytoplasm. In terms of biological role, required for formate dehydrogenase (FDH) activity. Acts as a sulfur carrier protein that transfers sulfur from IscS to the molybdenum cofactor prior to its insertion into FDH. In Shigella dysenteriae serotype 1 (strain Sd197), this protein is Sulfur carrier protein FdhD.